Here is a 466-residue protein sequence, read N- to C-terminus: Triplex capsid protein 1 (466 aa).

The interval 1 to 29 (MKTKPLPTAPMAWAESAVETTTSPRELAG) is disordered.

The protein belongs to the herpesviridae TRX1 protein family. In terms of assembly, interacts with TRX2, MCP and capsid vertex component 2/CVC2.

It localises to the virion. The protein resides in the host nucleus. Its function is as follows. Structural component of the T=16 icosahedral capsid. The capsid is composed of pentamers and hexamers of major capsid protein/MCP, which are linked together by heterotrimers called triplexes. These triplexes are formed by a single molecule of triplex protein 1/TRX1 and two copies of triplex protein 2/TRX2. Additionally, TRX1 is required for efficient transport of TRX2 to the nucleus, which is the site of capsid assembly. The protein is Triplex capsid protein 1 of Homo sapiens (Human).